The chain runs to 811 residues: tRNA(Met) cytidine acetyltransferase TmcA (811 aa).

The ATP site is built by Q267 and R439. An N-acetyltransferase domain is found at K473 to P662. Acetyl-CoA-binding positions include I589–T591, E629, and R636.

The protein belongs to the TmcA family.

Its subcellular location is the cytoplasm. The catalysed reaction is cytidine(34) in elongator tRNA(Met) + acetyl-CoA + ATP + H2O = N(4)-acetylcytidine(34) in elongator tRNA(Met) + ADP + phosphate + CoA + H(+). The enzyme catalyses a cytidine in RNA + acetyl-CoA + ATP + H2O = an N(4)-acetylcytidine in RNA + ADP + phosphate + CoA + H(+). It carries out the reaction a cytidine in tRNA + acetyl-CoA + ATP + H2O = an N(4)-acetylcytidine in tRNA + ADP + phosphate + CoA + H(+). It catalyses the reaction a cytidine in mRNA + acetyl-CoA + ATP + H2O = an N(4)-acetylcytidine in mRNA + ADP + phosphate + CoA + H(+). Its function is as follows. Catalyzes the formation of N(4)-acetylcytidine (ac(4)C) at the wobble position of tRNA(Met), by using acetyl-CoA as an acetyl donor and ATP (or GTP). Catalyzes the formation of 267 N(4)-acetylcytidine (ac(4)C) sites in RNA, almost always on the middle C of a CCG motif. Modifications are found in rRNA, ncRNA, mRNA and tRNA. More acetylation is observed at 95 than at 75 or 85 degrees Celsius. This chain is tRNA(Met) cytidine acetyltransferase TmcA, found in Thermococcus sp. (strain AM4).